A 183-amino-acid polypeptide reads, in one-letter code: Peptide deformylase (183 aa).

Fe cation contacts are provided by Cys-110 and His-153. Glu-154 is an active-site residue. His-157 is a Fe cation binding site.

This sequence belongs to the polypeptide deformylase family. The cofactor is Fe(2+).

The catalysed reaction is N-terminal N-formyl-L-methionyl-[peptide] + H2O = N-terminal L-methionyl-[peptide] + formate. In terms of biological role, removes the formyl group from the N-terminal Met of newly synthesized proteins. Requires at least a dipeptide for an efficient rate of reaction. N-terminal L-methionine is a prerequisite for activity but the enzyme has broad specificity at other positions. The protein is Peptide deformylase of Shouchella clausii (strain KSM-K16) (Alkalihalobacillus clausii).